Reading from the N-terminus, the 352-residue chain is Deoxyhypusine synthase-like protein (352 aa).

It belongs to the deoxyhypusine synthase family.

This Coxiella burnetii (strain Dugway 5J108-111) protein is Deoxyhypusine synthase-like protein.